The primary structure comprises 167 residues: Endoribonuclease YbeY (167 aa).

3 residues coordinate Zn(2+): His-126, His-130, and His-136.

This sequence belongs to the endoribonuclease YbeY family. Zn(2+) is required as a cofactor.

The protein localises to the cytoplasm. In terms of biological role, single strand-specific metallo-endoribonuclease involved in late-stage 70S ribosome quality control and in maturation of the 3' terminus of the 16S rRNA. The sequence is that of Endoribonuclease YbeY from Novosphingobium aromaticivorans (strain ATCC 700278 / DSM 12444 / CCUG 56034 / CIP 105152 / NBRC 16084 / F199).